A 102-amino-acid chain; its full sequence is Small ribosomal subunit protein uS10 (102 aa).

The protein belongs to the universal ribosomal protein uS10 family. Part of the 30S ribosomal subunit.

In terms of biological role, involved in the binding of tRNA to the ribosomes. The sequence is that of Small ribosomal subunit protein uS10 from Clostridium perfringens (strain ATCC 13124 / DSM 756 / JCM 1290 / NCIMB 6125 / NCTC 8237 / Type A).